We begin with the raw amino-acid sequence, 529 residues long: Bifunctional purine biosynthesis protein PurH (529 aa).

Positions 2-149 (TNLVPVGRAL…KNHRFVNVVT (148 aa)) constitute an MGS-like domain.

It belongs to the PurH family.

The enzyme catalyses (6R)-10-formyltetrahydrofolate + 5-amino-1-(5-phospho-beta-D-ribosyl)imidazole-4-carboxamide = 5-formamido-1-(5-phospho-D-ribosyl)imidazole-4-carboxamide + (6S)-5,6,7,8-tetrahydrofolate. It carries out the reaction IMP + H2O = 5-formamido-1-(5-phospho-D-ribosyl)imidazole-4-carboxamide. Its pathway is purine metabolism; IMP biosynthesis via de novo pathway; 5-formamido-1-(5-phospho-D-ribosyl)imidazole-4-carboxamide from 5-amino-1-(5-phospho-D-ribosyl)imidazole-4-carboxamide (10-formyl THF route): step 1/1. It functions in the pathway purine metabolism; IMP biosynthesis via de novo pathway; IMP from 5-formamido-1-(5-phospho-D-ribosyl)imidazole-4-carboxamide: step 1/1. This chain is Bifunctional purine biosynthesis protein PurH, found in Cereibacter sphaeroides (strain ATCC 17025 / ATH 2.4.3) (Rhodobacter sphaeroides).